Consider the following 93-residue polypeptide: Neutrophil cationic peptide 1 type A (93 aa).

Positions 1-19 (MRTVPLFAACLLLTLMAQA) are cleaved as a signal peptide. A propeptide spanning residues 20–62 (EPLPRAADHSDTKMKGDREDHVAVISFWEEESTSLEDAGAGAG) is cleaved from the precursor. Cystine bridges form between Cys-65/Cys-93, Cys-67/Cys-82, and Cys-72/Cys-92.

Belongs to the alpha-defensin family.

The protein resides in the secreted. In terms of biological role, has antibiotic, anti-fungi and antiviral activity. This Cavia porcellus (Guinea pig) protein is Neutrophil cationic peptide 1 type A.